Consider the following 341-residue polypeptide: Flagellar P-ring protein (341 aa).

The N-terminal stretch at 1–19 is a signal peptide; the sequence is MKQVFLWLIFVLAFHKLLA.

It belongs to the FlgI family. In terms of assembly, the basal body constitutes a major portion of the flagellar organelle and consists of four rings (L,P,S, and M) mounted on a central rod.

It is found in the periplasm. It localises to the bacterial flagellum basal body. Assembles around the rod to form the L-ring and probably protects the motor/basal body from shearing forces during rotation. This Helicobacter acinonychis (strain Sheeba) protein is Flagellar P-ring protein.